The sequence spans 335 residues: Ferrochelatase (335 aa).

Fe cation-binding residues include His-207 and Glu-288.

It belongs to the ferrochelatase family.

It localises to the cytoplasm. It carries out the reaction heme b + 2 H(+) = protoporphyrin IX + Fe(2+). It participates in porphyrin-containing compound metabolism; protoheme biosynthesis; protoheme from protoporphyrin-IX: step 1/1. Catalyzes the ferrous insertion into protoporphyrin IX. In Helicobacter pylori (strain G27), this protein is Ferrochelatase.